We begin with the raw amino-acid sequence, 343 residues long: S-adenosylmethionine:tRNA ribosyltransferase-isomerase (343 aa).

This sequence belongs to the QueA family. In terms of assembly, monomer.

It is found in the cytoplasm. The enzyme catalyses 7-aminomethyl-7-carbaguanosine(34) in tRNA + S-adenosyl-L-methionine = epoxyqueuosine(34) in tRNA + adenine + L-methionine + 2 H(+). The protein operates within tRNA modification; tRNA-queuosine biosynthesis. Functionally, transfers and isomerizes the ribose moiety from AdoMet to the 7-aminomethyl group of 7-deazaguanine (preQ1-tRNA) to give epoxyqueuosine (oQ-tRNA). This is S-adenosylmethionine:tRNA ribosyltransferase-isomerase from Syntrophotalea carbinolica (strain DSM 2380 / NBRC 103641 / GraBd1) (Pelobacter carbinolicus).